Reading from the N-terminus, the 318-residue chain is NAD kinase (318 aa).

Catalysis depends on Asp-84, which acts as the Proton acceptor. NAD(+) contacts are provided by residues 84 to 85 (DG), Arg-89, 159 to 160 (NE), Arg-170, Asp-189, and 200 to 205 (TAYAFS).

This sequence belongs to the NAD kinase family. Requires a divalent metal cation as cofactor.

It localises to the cytoplasm. It carries out the reaction NAD(+) + ATP = ADP + NADP(+) + H(+). Its function is as follows. Involved in the regulation of the intracellular balance of NAD and NADP, and is a key enzyme in the biosynthesis of NADP. Catalyzes specifically the phosphorylation on 2'-hydroxyl of the adenosine moiety of NAD to yield NADP. The protein is NAD kinase of Cutibacterium acnes (strain DSM 16379 / KPA171202) (Propionibacterium acnes).